Here is a 235-residue protein sequence, read N- to C-terminus: tRNA pseudouridine synthase B (235 aa).

The Nucleophile role is filled by Asp48.

Belongs to the pseudouridine synthase TruB family. Type 1 subfamily.

It catalyses the reaction uridine(55) in tRNA = pseudouridine(55) in tRNA. Functionally, responsible for synthesis of pseudouridine from uracil-55 in the psi GC loop of transfer RNAs. The protein is tRNA pseudouridine synthase B of Parabacteroides distasonis (strain ATCC 8503 / DSM 20701 / CIP 104284 / JCM 5825 / NCTC 11152).